Consider the following 361-residue polypeptide: Collagenase (361 aa).

This sequence belongs to the peptidase U32 family. Homodimer. Requires a metal cation as cofactor.

With respect to regulation, activity somewhat enhanced by calcium ions, inhibited by zinc and Fe(3+) ions and by p-chloromercuribenzoic acid and EDTA. Activity is enhanced by salivary peptide cystatin and reduced by salivary peptide histatin. Its function is as follows. Has collagenase activity. Active on soluble collagen, reconstituted type I collagen, heat denatured type I collagen and azocoll, but not gelatin or the synthetic bacterial collagenase substrate PZ-PLGPA. May play a role in virulence. This is Collagenase from Porphyromonas gingivalis (Bacteroides gingivalis).